A 246-amino-acid chain; its full sequence is Phycobilisome rod-core linker polypeptide CpcG2 (246 aa).

Residues S11–R189 form the PBS-linker domain. A disordered region spans residues D224–R246. Residues A235–R246 are compositionally biased toward polar residues.

Belongs to the phycobilisome linker protein family. As to quaternary structure, the phycobilisome is a hemidiscoidal structure that is composed of two distinct substructures: a core complex and a number of rods radiating from the core.

It localises to the cellular thylakoid membrane. Rod-core linker protein required for attachment of phycocyanin to allophycocyanin in cores of phycobilisomes. Its function is as follows. Linker polypeptides determine the state of aggregation and the location of the disk-shaped phycobiliprotein units within the phycobilisome and modulate their spectroscopic properties in order to mediate a directed and optimal energy transfer. The chain is Phycobilisome rod-core linker polypeptide CpcG2 (cpcG2) from Thermosynechococcus vestitus (strain NIES-2133 / IAM M-273 / BP-1).